Reading from the N-terminus, the 307-residue chain is Fructokinase (307 aa).

Belongs to the carbohydrate kinase PfkB family.

It catalyses the reaction D-fructose + ATP = D-fructose 6-phosphate + ADP + H(+). Functionally, involved in sucrose metabolism. The protein is Fructokinase (scrK) of Klebsiella pneumoniae.